The sequence spans 348 residues: Secreted frizzled-related protein 4 (348 aa).

The N-terminal stretch at 1-18 is a signal peptide; that stretch reads MLLSILVALCLCVRLALG. In terms of domain architecture, FZ spans 19–139; it reads VRGAPCEAVR…VYDRGVCISP (121 aa). Disulfide bonds link C24-C85, C32-C78, C69-C108, C97-C136, and C101-C125. 2 N-linked (GlcNAc...) asparagine glycosylation sites follow: N38 and N68. N-linked (GlcNAc...) asparagine glycosylation is found at N116, N194, and N240. Residues 178-296 enclose the NTR domain; sequence CKCKKVKPTL…WEERLQEQQR (119 aa). The span at 289 to 303 shows a compositional bias: basic and acidic residues; the sequence is ERLQEQQRTTQDKKQ. The segment at 289-348 is disordered; it reads ERLQEQQRTTQDKKQIASRTSRSNPPKPKGRSPASKPASPKKNIKARSAPKKSNPKKSTS. Residues 330 to 348 are compositionally biased toward basic residues; it reads KNIKARSAPKKSNPKKSTS.

It belongs to the secreted frizzled-related protein (sFRP) family. In terms of tissue distribution, expressed in the involuting mammary gland, ovarian corpus luteum and prostate. In ovaries, low levels found in granulosa cells. High levels in corpora lutea of pregnant animals.

Its subcellular location is the secreted. Its function is as follows. Soluble frizzled-related proteins (sFRPS) function as modulators of Wnt signaling through direct interaction with Wnts. They have a role in regulating cell growth and differentiation in specific cell types. SFRP4 plays a role in bone morphogenesis. May also act as a regulator of adult uterine morphology and function. May also increase apoptosis during ovulation possibly through modulation of FZ1/FZ4/WNT4 signaling. Has phosphaturic effects by specifically inhibiting sodium-dependent phosphate uptake. In Rattus norvegicus (Rat), this protein is Secreted frizzled-related protein 4 (Sfrp4).